The chain runs to 230 residues: Cytidylate kinase (230 aa).

Gly12–Thr20 provides a ligand contact to ATP.

This sequence belongs to the cytidylate kinase family. Type 1 subfamily.

The protein localises to the cytoplasm. The enzyme catalyses CMP + ATP = CDP + ADP. The catalysed reaction is dCMP + ATP = dCDP + ADP. This Shewanella halifaxensis (strain HAW-EB4) protein is Cytidylate kinase.